The primary structure comprises 451 residues: tRNA modification GTPase MnmE (451 aa).

Arginine 25, glutamate 82, and lysine 121 together coordinate (6S)-5-formyl-5,6,7,8-tetrahydrofolate. In terms of domain architecture, TrmE-type G spans 217–374; it reads GMSVVILGRP…LKQHLKTEMG (158 aa). Asparagine 227 serves as a coordination point for K(+). GTP contacts are provided by residues 227–232, 246–252, and 271–274; these read NAGKSS, TDIAGTT, and DTAG. Serine 231 contacts Mg(2+). Residues threonine 246, isoleucine 248, and threonine 251 each contribute to the K(+) site. Residue threonine 252 coordinates Mg(2+). (6S)-5-formyl-5,6,7,8-tetrahydrofolate is bound at residue lysine 451.

The protein belongs to the TRAFAC class TrmE-Era-EngA-EngB-Septin-like GTPase superfamily. TrmE GTPase family. As to quaternary structure, homodimer. Heterotetramer of two MnmE and two MnmG subunits. Requires K(+) as cofactor.

The protein localises to the cytoplasm. Its function is as follows. Exhibits a very high intrinsic GTPase hydrolysis rate. Involved in the addition of a carboxymethylaminomethyl (cmnm) group at the wobble position (U34) of certain tRNAs, forming tRNA-cmnm(5)s(2)U34. This Hydrogenovibrio crunogenus (strain DSM 25203 / XCL-2) (Thiomicrospira crunogena) protein is tRNA modification GTPase MnmE.